The sequence spans 356 residues: Histidinol-phosphate aminotransferase (356 aa).

An N6-(pyridoxal phosphate)lysine modification is found at lysine 208.

The protein belongs to the class-II pyridoxal-phosphate-dependent aminotransferase family. Histidinol-phosphate aminotransferase subfamily. As to quaternary structure, homodimer. It depends on pyridoxal 5'-phosphate as a cofactor.

It catalyses the reaction L-histidinol phosphate + 2-oxoglutarate = 3-(imidazol-4-yl)-2-oxopropyl phosphate + L-glutamate. It participates in amino-acid biosynthesis; L-histidine biosynthesis; L-histidine from 5-phospho-alpha-D-ribose 1-diphosphate: step 7/9. This Lactococcus lactis subsp. cremoris (strain SK11) protein is Histidinol-phosphate aminotransferase.